A 945-amino-acid chain; its full sequence is Valine--tRNA ligase (945 aa).

Residues Pro42 to His52 carry the 'HIGH' region motif. A 'KMSKS' region motif is present at residues Lys552–Ser556. Lys555 contacts ATP. Residues Asp879 to Asp945 are a coiled coil.

It belongs to the class-I aminoacyl-tRNA synthetase family. ValS type 1 subfamily. Monomer.

It is found in the cytoplasm. The enzyme catalyses tRNA(Val) + L-valine + ATP = L-valyl-tRNA(Val) + AMP + diphosphate. Catalyzes the attachment of valine to tRNA(Val). As ValRS can inadvertently accommodate and process structurally similar amino acids such as threonine, to avoid such errors, it has a 'posttransfer' editing activity that hydrolyzes mischarged Thr-tRNA(Val) in a tRNA-dependent manner. This chain is Valine--tRNA ligase, found in Neisseria meningitidis serogroup A / serotype 4A (strain DSM 15465 / Z2491).